The following is a 504-amino-acid chain: ATP synthase subunit alpha, chloroplastic (504 aa).

170–177 lines the ATP pocket; it reads GDRQTGKT.

This sequence belongs to the ATPase alpha/beta chains family. F-type ATPases have 2 components, CF(1) - the catalytic core - and CF(0) - the membrane proton channel. CF(1) has five subunits: alpha(3), beta(3), gamma(1), delta(1), epsilon(1). CF(0) has four main subunits: a, b, b' and c.

It is found in the plastid. The protein localises to the chloroplast thylakoid membrane. It carries out the reaction ATP + H2O + 4 H(+)(in) = ADP + phosphate + 5 H(+)(out). Its function is as follows. Produces ATP from ADP in the presence of a proton gradient across the membrane. The alpha chain is a regulatory subunit. The protein is ATP synthase subunit alpha, chloroplastic of Ostreococcus tauri.